We begin with the raw amino-acid sequence, 1174 residues long: Pesticidal crystal protein Cry1Fa (1174 aa).

This sequence belongs to the delta endotoxin family.

Its function is as follows. Promotes colloidosmotic lysis by binding to the midgut epithelial cells of many lepidopteran larvae. The chain is Pesticidal crystal protein Cry1Fa (cry1Fa) from Bacillus thuringiensis subsp. aizawai.